A 572-amino-acid chain; its full sequence is Sialate:O-sulfotransferase 2 (572 aa).

Residues 1–18 (MARSLLKIHRYFRRKPVR) lie on the Cytoplasmic side of the membrane. The helical; Signal-anchor for type II membrane protein transmembrane segment at 19 to 39 (FFSFILLYLTAGSLVFLHSGF) threads the bilayer. The Extracellular segment spans residues 40–572 (SSDSSTAGIA…SGVPDEYRPR (533 aa)). WSC domains follow at residues 134-226 (RAKY…YRLE) and 237-331 (SAIF…YQTQ). Residues Asn196, Asn249, Asn262, and Asn561 are each glycosylated (N-linked (GlcNAc...) asparagine).

This sequence belongs to the WSCD family.

It localises to the golgi apparatus membrane. In terms of biological role, sialate:O-sulfotransferase which catalyzes 8-O-sulfation at the Sia-glycan level using 3'-phosphoadenosine 5'-phosphosulfate (PAPS) as a donor, forming 8-O-sulfated Sia (Sia8S)-glycans. This is Sialate:O-sulfotransferase 2 (wscd2) from Danio rerio (Zebrafish).